A 548-amino-acid polypeptide reads, in one-letter code: Pentatricopeptide repeat-containing protein At1g62680, mitochondrial (548 aa).

A mitochondrion-targeting transit peptide spans 1 to 43 (MQRSIAMTAKRFLHRNLLENGKPRTASSPSFSHCSSCRCWVRA). 12 PPR repeats span residues 84–118 (SIVD…GIRN), 119–153 (DLYT…GYEP), 154–188 (DRVT…GYKP), 189–223 (DIVA…GIRP), 224–258 (NVVT…KITP), 259–293 (NVIT…SIDP), 294–328 (DIVT…GCLA), 329–363 (DVVS…GLVS), 364–398 (NTVT…GISP), 399–433 (DIWT…EMDL), 434–468 (DIVT…GLKP), and 469–503 (DIVT…GLMK).

This sequence belongs to the PPR family. P subfamily.

The protein resides in the mitochondrion. In Arabidopsis thaliana (Mouse-ear cress), this protein is Pentatricopeptide repeat-containing protein At1g62680, mitochondrial.